The primary structure comprises 190 residues: GTP cyclohydrolase 1 (190 aa).

The Zn(2+) site is built by cysteine 75, histidine 78, and cysteine 146.

Belongs to the GTP cyclohydrolase I family. As to quaternary structure, homomer.

It catalyses the reaction GTP + H2O = 7,8-dihydroneopterin 3'-triphosphate + formate + H(+). It participates in cofactor biosynthesis; 7,8-dihydroneopterin triphosphate biosynthesis; 7,8-dihydroneopterin triphosphate from GTP: step 1/1. This is GTP cyclohydrolase 1 from Campylobacter jejuni subsp. jejuni serotype O:6 (strain 81116 / NCTC 11828).